Here is an 838-residue protein sequence, read N- to C-terminus: Multiphosphoryl transfer protein (838 aa).

The region spanning 7-147 is the PTS EIIA type-2 domain; that stretch reads APVTPDLVRL…AVIVAALTGD (141 aa). The active-site Tele-phosphohistidine intermediate; for EIIA activity is H67. At H67 the chain carries Phosphohistidine; by HPr. Positions 161-253 constitute an HPr domain; that stretch reads AERFEWTIAY…LTAQEKADAE (93 aa). H175 functions as the Pros-phosphohistidine intermediate; for HPr activity in the catalytic mechanism. H175 bears the Phosphohistidine; by EI mark. The PTS EI stretch occupies residues 274–838; that stretch reads AIVGIGASPG…ALEAQREGQA (565 aa). The Tele-phosphohistidine intermediate; for PTS EI activity role is filled by H460. Phosphohistidine; by autocatalysis is present on H460. Phosphoenolpyruvate is bound by residues R567 and R603. Mg(2+) contacts are provided by E697 and D721. Residues 720–721 and R731 contribute to the phosphoenolpyruvate site; that span reads ND. Catalysis depends on C768, which acts as the Proton donor.

It belongs to the PEP-utilizing enzyme family. The cofactor is Mg(2+).

It localises to the cytoplasm. It catalyses the reaction L-histidyl-[protein] + phosphoenolpyruvate = N(pros)-phospho-L-histidyl-[protein] + pyruvate. Its function is as follows. The phosphoenolpyruvate-dependent sugar phosphotransferase system (sugar PTS), a major carbohydrate active transport system, catalyzes the phosphorylation of incoming sugar substrates concomitantly with their translocation across the cell membrane. The enzyme II FruAB PTS system is involved in fructose transport. In Xanthomonas campestris pv. campestris (strain ATCC 33913 / DSM 3586 / NCPPB 528 / LMG 568 / P 25), this protein is Multiphosphoryl transfer protein.